The chain runs to 727 residues: Translation initiation factor IF-2, mitochondrial (727 aa).

The transit peptide at 1 to 29 (MNQKLLKLENLLRFHTICRQVHSPSQRRL) directs the protein to the mitochondrion. Positions 178–346 (PRSPVVTVMG…ATIALAEILE (169 aa)) constitute a tr-type G domain. The tract at residues 187-194 (GHVDHGKT) is G1. 187–194 (GHVDHGKT) contacts GTP. Residues 212-216 (GITQH) form a G2 region. GTP is bound by residues 234–237 (DTPG) and 288–291 (NKCD). Residues 234-237 (DTPG) form a G3 region. The segment at 288–291 (NKCD) is G4. Positions 324 to 326 (SAL) are G5. T688 is modified (phosphothreonine).

This sequence belongs to the TRAFAC class translation factor GTPase superfamily. Classic translation factor GTPase family. IF-2 subfamily. As to quaternary structure, monomer.

Its subcellular location is the mitochondrion. In terms of biological role, one of the essential components for the initiation of protein synthesis. Protects formylmethionyl-tRNA from spontaneous hydrolysis and promotes its binding to the 30S ribosomal subunits. Also involved in the hydrolysis of GTP during the formation of the 70S ribosomal complex. In Mus musculus (Mouse), this protein is Translation initiation factor IF-2, mitochondrial (Mtif2).